Here is a 447-residue protein sequence, read N- to C-terminus: GTPase Der (447 aa).

EngA-type G domains follow at residues 3 to 167 (PVVA…HLED) and 180 to 353 (IKLA…KAAN). Residues 9–16 (GRPNVGKS), 56–60 (DTGGF), 119–122 (NKAE), 186–193 (GRPNVGKS), 233–237 (DTAGL), and 298–301 (NKWD) each bind GTP. One can recognise a KH-like domain in the interval 354–438 (CKMSTPILTR…PMRIEFKSST (85 aa)).

The protein belongs to the TRAFAC class TrmE-Era-EngA-EngB-Septin-like GTPase superfamily. EngA (Der) GTPase family. Associates with the 50S ribosomal subunit.

Functionally, GTPase that plays an essential role in the late steps of ribosome biogenesis. The protein is GTPase Der of Albidiferax ferrireducens (strain ATCC BAA-621 / DSM 15236 / T118) (Rhodoferax ferrireducens).